Here is a 214-residue protein sequence, read N- to C-terminus: Adenylate kinase (214 aa).

10-15 (GAGKGT) lines the ATP pocket. The tract at residues 30–59 (STGDMLRAAIKEGTPLGLEAKKVMDAGQLI) is NMP. AMP-binding positions include Thr-31, Arg-36, 57–59 (QLI), 85–88 (GFPR), and Gln-92. The LID stretch occupies residues 122 to 159 (GRRVHPGSGRVYHVVYNPPKVADKDNETGEELIIRADD). Residues Arg-123 and 132–133 (VY) each bind ATP. AMP-binding residues include Arg-156 and Arg-167. Gln-200 contributes to the ATP binding site.

Belongs to the adenylate kinase family. As to quaternary structure, monomer.

Its subcellular location is the cytoplasm. It catalyses the reaction AMP + ATP = 2 ADP. It functions in the pathway purine metabolism; AMP biosynthesis via salvage pathway; AMP from ADP: step 1/1. Functionally, catalyzes the reversible transfer of the terminal phosphate group between ATP and AMP. Plays an important role in cellular energy homeostasis and in adenine nucleotide metabolism. The polypeptide is Adenylate kinase (Pseudoalteromonas translucida (strain TAC 125)).